The chain runs to 269 residues: MAGQRAPHLHLAELSASQFLDVWRHFDADGNGYIEGKELENFFQELESARKGTGVDSKRDSLGDKMKEFMHKYDKNADGKIEMAELAQILPTEENFLLCFRQHVGSSSEFMEAWRRYDTDRSGYIEANELKGFLSDLLKKANRPYDEAKLQEYTQTILRMFDMNGDGKLGLSEMSRLLPVQENFLLKFQGMKLSSEEFNAIFAFYDKDGSGFIDEHELDALLKDLYEKNKKEMSIQQLTNYRRSIMNLSDGGKLYRKELEVVLCSEPPL.

EF-hand domains are found at residues 14-49 (LSAS…LESA), 61-96 (SLGD…EENF), 105-140 (GSSS…LLKK), 149-184 (KLQE…QENF), 193-228 (LSSE…LYEK), and 230-265 (KKEM…VLCS). Ca(2+)-binding residues include Asp27, Asp29, Asn31, Tyr33, Glu38, Asp74, Asn76, Asp78, Lys80, Glu85, Asp118, Asp120, Ser122, Tyr124, Glu129, Asp162, Asn164, Asp166, Lys168, Glu173, Asp206, Asp208, Ser210, and Glu217.

It belongs to the calbindin family.

It localises to the synapse. Its subcellular location is the cell projection. The protein localises to the dendrite. Calcium-binding protein involved in calcium homeostasis and signal transduction. It plays a critical role in buffering intracellular calcium levels and modulating calcium-dependent signaling pathways. Predominantly expressed in specific neuronal populations, influences synaptic plasticity and neuronal excitability, contributing to learning and memory. During embryonic development, it facilitates neuronal differentiation and maturation. This chain is Calretinin (CALB2), found in Gallus gallus (Chicken).